The sequence spans 350 residues: ATPase GET3 (350 aa).

26-33 (KGGVGKTT) is an ATP binding site. Asp57 is a catalytic residue. ATP-binding residues include Glu241 and Asn268. Residues Cys281 and Cys284 each contribute to the Zn(2+) site.

Belongs to the arsA ATPase family. Homodimer. Component of the Golgi to ER traffic (GET) complex, which is composed of GET1, GET2 and GET3. Within the complex, GET1 and GET2 form a heterotetramer which is stabilized by phosphatidylinositol binding and which binds to the GET3 homodimer. Interacts with the chloride channel protein GEF1.

Its subcellular location is the cytoplasm. It localises to the endoplasmic reticulum. It is found in the golgi apparatus. In terms of biological role, ATPase required for the post-translational delivery of tail-anchored (TA) proteins to the endoplasmic reticulum. Recognizes and selectively binds the transmembrane domain of TA proteins in the cytosol. This complex then targets to the endoplasmic reticulum by membrane-bound receptors GET1 and GET2, where the tail-anchored protein is released for insertion. This process is regulated by ATP binding and hydrolysis. ATP binding drives the homodimer towards the closed dimer state, facilitating recognition of newly synthesized TA membrane proteins. ATP hydrolysis is required for insertion. Subsequently, the homodimer reverts towards the open dimer state, lowering its affinity for the GET1-GET2 receptor, and returning it to the cytosol to initiate a new round of targeting. Cooperates with the HDEL receptor ERD2 to mediate the ATP-dependent retrieval of resident ER proteins that contain a C-terminal H-D-E-L retention signal from the Golgi to the ER. Involved in low-level resistance to the oxyanions arsenite and arsenate, and in heat tolerance. The chain is ATPase GET3 from Candida glabrata (strain ATCC 2001 / BCRC 20586 / JCM 3761 / NBRC 0622 / NRRL Y-65 / CBS 138) (Yeast).